A 413-amino-acid chain; its full sequence is Gamma-glutamyl phosphate reductase (413 aa).

It belongs to the gamma-glutamyl phosphate reductase family.

It is found in the cytoplasm. The enzyme catalyses L-glutamate 5-semialdehyde + phosphate + NADP(+) = L-glutamyl 5-phosphate + NADPH + H(+). It functions in the pathway amino-acid biosynthesis; L-proline biosynthesis; L-glutamate 5-semialdehyde from L-glutamate: step 2/2. Functionally, catalyzes the NADPH-dependent reduction of L-glutamate 5-phosphate into L-glutamate 5-semialdehyde and phosphate. The product spontaneously undergoes cyclization to form 1-pyrroline-5-carboxylate. The sequence is that of Gamma-glutamyl phosphate reductase from Lactococcus lactis subsp. cremoris (strain SK11).